Here is a 376-residue protein sequence, read N- to C-terminus: Geranylgeranyl transferase type-1 subunit beta (376 aa).

PFTB repeat units lie at residues 128-179 (KRSL…YICG), 192-231 (TEKL…ALLS), 259-301 (MKFE…HLLT), and 310-353 (TELV…ALIE). Residues 216–218 (HSG) and 280–283 (RENK) contribute to the geranylgeranyl diphosphate site. Zn(2+)-binding residues include aspartate 286 and cysteine 288. 289-292 (YAFW) is a binding site for geranylgeranyl diphosphate. Residue histidine 341 participates in Zn(2+) binding.

The protein belongs to the protein prenyltransferase subunit beta family. In terms of assembly, heterodimer of an alpha (RAM2) and a beta (CDC43) subunit. Zn(2+) is required as a cofactor. Requires Mg(2+) as cofactor.

It is found in the cytoplasm. It catalyses the reaction geranylgeranyl diphosphate + L-cysteinyl-[protein] = S-geranylgeranyl-L-cysteinyl-[protein] + diphosphate. Functionally, catalyzes the transfer of a geranyl-geranyl moiety from geranyl-geranyl diphosphate to proteins having the C-terminal sequence Cys-Ile-Ile-Leu or Cys-Val-Leu-Leu. Acts, among other substrates, on Rho1 and Rho2 and CDC42 proteins. Participates in a RAS-like C-terminal modification of proteins involved in nuclear division and bud growth. It is involved in bud positioning and cell polarity. The beta subunit is responsible for isoprenoid and peptide-binding. The chain is Geranylgeranyl transferase type-1 subunit beta (CDC43) from Saccharomyces cerevisiae (strain ATCC 204508 / S288c) (Baker's yeast).